We begin with the raw amino-acid sequence, 89 residues long: C-C motif chemokine 18 (89 aa).

The N-terminal stretch at 1–20 (MKGLAAALLVLVCTMALCSC) is a signal peptide. Disulfide bonds link cysteine 30–cysteine 54 and cysteine 31–cysteine 70.

The protein belongs to the intercrine beta (chemokine CC) family. Post-translationally, the Cys-30/Cys-54 disulfide bond is required for activity. As to expression, expressed at high levels in lung, lymph nodes, placenta, bone marrow, dendritic cells present in germinal centers and T-cell areas of secondary lymphoid organs and macrophages derived from peripheral blood monocytes. Not expressed by peripheral blood monocytes and a monocyte-to-macrophage differentiation is a prerequisite for expression. Expressed in synovial fluids from patients with rheumatoid and septic arthritis and in ovarian carcinoma ascitic fluid.

It localises to the secreted. Functionally, chemotactic factor that attracts lymphocytes but not monocytes or granulocytes. May be involved in B-cell migration into B-cell follicles in lymph nodes. Attracts naive T-lymphocytes toward dendritic cells and activated macrophages in lymph nodes, has chemotactic activity for naive T-cells, CD4+ and CD8+ T-cells and thus may play a role in both humoral and cell-mediated immunity responses. The chain is C-C motif chemokine 18 (CCL18) from Homo sapiens (Human).